A 465-amino-acid chain; its full sequence is MSRPDRAINSEAGDWGYSEDAGERAWLLQSPSVDSVQPPSQSDDSRGGTSSLGAVFIVVNAALGAGLLNFPAAFNMAGGITAGVTLQMCMMAFIITGLVILAYCSQVSNESTYQEVVRAVCGKALGVICELAIAVYTFGTCIAFLIIIGDQLDKLIGAINNESEKEISLHWYTDRKFTITLTSVLIILPLSIPKEIGFQKYASTLSVIGTWYVTIIVIVKYIWPSKDVSPGIIPVRPASWTDVFNAMPTICFGFQCHVSSVPVFNSMKKPEIRPWWGVVTISMIICLFVYTGTGVCGFLSFGSSVSQDVLMSYPSDDVAVAIARAFIIICVVTSYPILHFCGRAVLEGLWLRFKGEEVETDVAKERRRRILQTLVWFCLTLILALFIPDIGRVISLIGGLAACFIFVFPGLCLIQAKLSEHDVRSNSWNAMVAYGVIMVTIGAFIFGQTTTNAIYKDIINNPNSP.

The next 11 helical transmembrane spans lie at 54-74 (AVFI…PAAF), 82-102 (AGVT…VILA), 128-148 (ICEL…LIII), 177-197 (FTIT…KEIG), 204-224 (TLSV…YIWP), 244-264 (FNAM…VPVF), 275-295 (WWGV…GTGV), 318-338 (VAVA…YPIL), 370-390 (ILQT…IPDI), 394-414 (ISLI…LCLI), and 427-447 (SWNA…FIFG).

Belongs to the amino acid/polyamine transporter 2 family.

The protein localises to the lysosome membrane. Its subcellular location is the cell projection. The protein resides in the axon. It catalyses the reaction L-asparagine(in) + Na(+)(in) = L-asparagine(out) + Na(+)(out). It carries out the reaction L-glutamine(in) + Na(+)(in) = L-glutamine(out) + Na(+)(out). In terms of biological role, symporter that selectively cotransports sodium ions and amino acids, such as L-glutamine and L-asparagine from the lysosome into the cytoplasm and may participates in mTORC1 activation. The transport activity requires an acidic lysosomal lumen. The sequence is that of Sodium-coupled neutral amino acid transporter 7 from Danio rerio (Zebrafish).